A 342-amino-acid polypeptide reads, in one-letter code: Paired box protein Pax-9 (342 aa).

Residues 4–130 (AFGEVNQLGG…SSISRILRNK (127 aa)) constitute a DNA-binding region (paired). Positions 7–63 (EVNQLGGVFVNGRPLPNAIRLRIVELAQLGIRPCDISRQLRVSHGCVSKILARYNET) are PAI subdomain. The RED subdomain stretch occupies residues 82–130 (TVVKHIRTYKQRDPGIFAWEIRDRLLADGVCDKYNVPSVSSISRILRNK). The interval 168-189 (AAAAKVPTPPGVPAIPGSVALP) is interaction with KDM5B.

As to quaternary structure, interacts with KDM5B. In the embryo, expressed in pharyngeal pouches and derivatives, developing vertebral column, tail, head and limbs.

It is found in the nucleus. In terms of biological role, transcription factor required for normal development of thymus, parathyroid glands, ultimobranchial bodies, teeth, skeletal elements of skull and larynx as well as distal limbs. This Mus musculus (Mouse) protein is Paired box protein Pax-9 (Pax9).